A 366-amino-acid chain; its full sequence is Protein-glutamate methylesterase/protein-glutamine glutaminase (366 aa).

Residues Arg5–Arg123 enclose the Response regulatory domain. Asp56 is subject to 4-aspartylphosphate. Residues Pro163–Gln355 enclose the CheB-type methylesterase domain. Catalysis depends on residues Ser175, His201, and Asp297.

This sequence belongs to the CheB family. Post-translationally, phosphorylated by CheA. Phosphorylation of the N-terminal regulatory domain activates the methylesterase activity.

It localises to the cytoplasm. It carries out the reaction [protein]-L-glutamate 5-O-methyl ester + H2O = L-glutamyl-[protein] + methanol + H(+). The enzyme catalyses L-glutaminyl-[protein] + H2O = L-glutamyl-[protein] + NH4(+). In terms of biological role, involved in chemotaxis. Part of a chemotaxis signal transduction system that modulates chemotaxis in response to various stimuli. Catalyzes the demethylation of specific methylglutamate residues introduced into the chemoreceptors (methyl-accepting chemotaxis proteins or MCP) by CheR. Also mediates the irreversible deamidation of specific glutamine residues to glutamic acid. The polypeptide is Protein-glutamate methylesterase/protein-glutamine glutaminase (Nocardioides sp. (strain ATCC BAA-499 / JS614)).